Here is a 671-residue protein sequence, read N- to C-terminus: MSELLDLSFLSEEEKDLILSVLQRDEEVRKADEKRIRRLKNELLEIKRKGAKRGSQHYSDRTCARCQESLGRLSPKTNTCRGCNHLVCRDCRIQESNGTWRCKVCAKEIELKKATGDWFYDQKVNRFAYRTGSEIIRMSLRHKPAVSKRETVGQSLLHQTQMGDIWPGRKIIQERQKEPSVLFEVPKLKSGKSALEAESESLDSFTADSDSTSRRDSLDKSGLFPEWKKMSAPKSQVEKETQPGGQNVVFVDEGEMIFKKNTRKILRPSEYTKSVIDLRPEDVVHESGSLGDRSKSVPGLNVDMEEEEEEEDIDHLVKLHRQKLARSSMQSGSSMSTIGSMMSIYSEAGDFGNIFVTGRIAFSLKYEQQTQSLVVHVKECHQLAYADEAKKRSNPYVKTYLLPDKSRQGKRKTSIKRDTINPLYDETLRYEIPESLLAQRTLQFSVWHHGRFGRNTFLGEAEIQMDSWKLDKKLDHCLPLHGKISAESPTGLPSHKGELVVSLKYIPASKTPVGGDRKKSKGGEGGELQVWIKEAKNLTAAKAGGTSDSFVKGYLLPMRNKASKRKTPVMKKTLNPHYNHTFVYNGVRLEDLQHMCLELTVWDREPLASNDFLGGVRLGVGTGISNGEVVDWMDSTGEEVSLWQKMRQYPGSWAEGTLQLRSSMAKQKLGL.

The 119-residue stretch at 4-122 folds into the RabBD domain; sequence LLDLSFLSEE…KATGDWFYDQ (119 aa). The FYVE-type zinc finger occupies 63 to 105; that stretch reads CARCQESLGRLSPKTNTCRGCNHLVCRDCRIQESNGTWRCKVC. The disordered stretch occupies residues 199–243; sequence SESLDSFTADSDSTSRRDSLDKSGLFPEWKKMSAPKSQVEKETQP. Phosphoserine is present on residues S201, S204, S217, S221, S274, and S289. The region spanning 356-478 is the C2 1 domain; that stretch reads VTGRIAFSLK…KLDKKLDHCL (123 aa). S488 is subject to Phosphoserine. Residues 507 to 633 enclose the C2 2 domain; sequence PASKTPVGGD…ISNGEVVDWM (127 aa).

Part of a ternary complex containing STX1A and RAB27A. Can bind both dominant negative and dominant active mutants of RAB27A. Binds STXBP1, RAB3A, RAB8A and RAB27B. Interacts with MYO5A.

The protein localises to the membrane. It is found in the cell membrane. The protein resides in the cytoplasmic vesicle. Its subcellular location is the secretory vesicle membrane. In terms of biological role, modulates exocytosis of dense-core granules and secretion of hormones in the pancreas and the pituitary. Interacts with vesicles containing negatively charged phospholipids in a Ca(2+)-independent manner. This Homo sapiens (Human) protein is Synaptotagmin-like protein 4 (SYTL4).